Here is a 90-residue protein sequence, read N- to C-terminus: Small ribosomal subunit protein bS18 (90 aa).

It belongs to the bacterial ribosomal protein bS18 family. Part of the 30S ribosomal subunit. Forms a tight heterodimer with protein bS6.

Binds as a heterodimer with protein bS6 to the central domain of the 16S rRNA, where it helps stabilize the platform of the 30S subunit. The sequence is that of Small ribosomal subunit protein bS18 from Bacteroides thetaiotaomicron (strain ATCC 29148 / DSM 2079 / JCM 5827 / CCUG 10774 / NCTC 10582 / VPI-5482 / E50).